Reading from the N-terminus, the 356-residue chain is Carminomycin 4-O-methyltransferase DauK (356 aa).

Arginine 153 is an S-adenosyl-L-methionine binding site. Position 163 (aspartate 163) interacts with substrate. Residues glycine 187, glutamate 210, aspartate 237–phenylalanine 238, and serine 252 contribute to the S-adenosyl-L-methionine site. The substrate site is built by asparagine 257 and arginine 303.

This sequence belongs to the class I-like SAM-binding methyltransferase superfamily. Cation-independent O-methyltransferase family. Homodimer and homotetramer in equilibrium.

The catalysed reaction is carminomycin + S-adenosyl-L-methionine = daunorubicin + S-adenosyl-L-homocysteine + H(+). It functions in the pathway antibiotic biosynthesis; daunorubicin biosynthesis. The protein operates within antibiotic biosynthesis; carminomycin biosynthesis. Strongly inhibited by S-adenosyl-L-homocysteine and weakly by adenine and methionine. Involved in the biosynthesis of the anthracyclines carminomycin and daunorubicin (daunomycin) which are aromatic polyketide antibiotics that exhibit high cytotoxicity and are widely applied in the chemotherapy of a variety of cancers. In vivo, catalyzes the transfer of a methyl group from S-adenosyl-L-methionine to the 4-O-position of carminomycin to form daunorubicin. In vitro, it also methylates the anthracyclines rhodomycin D (10-carbomethoxy-13-deoxycarminomycin), 10-carboxy-13-deoxycarminomycin, 13-deoxy-carminomycin and 13-dihydrocarminomycin at the 4-hydroxyl position. In Streptomyces sp. (strain C5), this protein is Carminomycin 4-O-methyltransferase DauK (dauK).